Consider the following 440-residue polypeptide: MVKKNIVVVGTQWGDEGKGKIVDLLTDRVAAVVRFQGGHNAGHTLVIDGKKTVLHLIPSGILREDVECFIGNGVVLAPEALEKEVAQLEDTGLKVKHRLKISDACPLILDYHVALDQARELARGNKAIGTTGRGIGPAYEDKVARRGLRAGDLKNMSQLKQKLQTAMEYHNYMLTNYYKAEPVDFETLWAKCQAYADLIVPMLADIPNLIDLYNKEGKNLMFEGAQGTLLDIDQGTYPYVTSSNTTAGGAASGSGIGPCQLDYVLGITKAYATRVGGGPFPTELRYDVATDEGDAVGKELGTRGREFGATTGRQRRCGWFDAVALRRSAQVNGLTGVCLTKLDVLDELEEIKVCTKYRKDGQDVFLPPSSADEYELVEPHYETLKGWNTSTVGIDSWDALPEEAKVYIRFLEKEMGVTVSILSTGPDRSETLVLEDPFEV.

Residues 14 to 20 (GDEGKGK) and 42 to 44 (GHT) contribute to the GTP site. Asp-15 serves as the catalytic Proton acceptor. Asp-15 and Gly-42 together coordinate Mg(2+). IMP-binding positions include 15–18 (DEGK), 40–43 (NAGH), Thr-131, Arg-145, Gln-226, Thr-241, and Arg-313. Catalysis depends on His-43, which acts as the Proton donor. 309-315 (ATTGRQR) provides a ligand contact to substrate. GTP-binding positions include Arg-315, 341 to 343 (KLD), and 423 to 425 (STG).

The protein belongs to the adenylosuccinate synthetase family. Homodimer. The cofactor is Mg(2+).

The protein localises to the cytoplasm. It carries out the reaction IMP + L-aspartate + GTP = N(6)-(1,2-dicarboxyethyl)-AMP + GDP + phosphate + 2 H(+). It participates in purine metabolism; AMP biosynthesis via de novo pathway; AMP from IMP: step 1/2. Plays an important role in the de novo pathway of purine nucleotide biosynthesis. Catalyzes the first committed step in the biosynthesis of AMP from IMP. The polypeptide is Adenylosuccinate synthetase (Hydrogenovibrio crunogenus (strain DSM 25203 / XCL-2) (Thiomicrospira crunogena)).